Here is a 394-residue protein sequence, read N- to C-terminus: Actin-related protein 2-B (394 aa).

ATP is bound by residues 160–162 (GDG), 214–218 (RMMKE), and 305–310 (GGSTMY).

The protein belongs to the actin family. ARP2 subfamily. In terms of assembly, component of the Arp2/3 complex composed of actr2/arp2, actr3/arp3, arpc1b, arpc2, arpc3, arpc4 and arpc5.

The protein localises to the cytoplasm. Its subcellular location is the cytoskeleton. The protein resides in the cell projection. It is found in the nucleus. Functionally, ATP-binding component of the Arp2/3 complex, a multiprotein complex that mediates actin polymerization upon stimulation by nucleation-promoting factor (NPF). The Arp2/3 complex mediates the formation of branched actin networks in the cytoplasm, providing the force for cell motility. Seems to contact the pointed end of the daughter actin filament. In addition to its role in the cytoplasmic cytoskeleton, the Arp2/3 complex also promotes actin polymerization in the nucleus, thereby regulating gene transcription and repair of damaged DNA. The Arp2/3 complex promotes homologous recombination (HR) repair in response to DNA damage by promoting nuclear actin polymerization, leading to drive motility of double-strand breaks (DSBs). The chain is Actin-related protein 2-B (actr2b) from Danio rerio (Zebrafish).